Consider the following 530-residue polypeptide: MPSNMKQFCKISVWLQQHDPDLLEIINNLCMLGNLSAAKYKHGVTFIYPKQAKIRDEIKKHAYSNDPSQAIKTLESLILPFYIPTPAEFTGEIGSYTGVKLEVEKTEANKVILKNGEAVLIPAADFKPFPDRRLAVWIMESGSMPLEGPPYKRKKEGGGNDPPVPKHISPYTPRTRIAIEVEKAFDDCMRQNWCSVNNPYLAKSVSLLSFLSLNHPTEFIKVLPLIDFDPLVTFYLLLEPYKTHGDDFLIPETVLFGPTGWNGTDLYQSAMLEFKKFFTQITRQTFMDIADTATKEVDVPICYSDPETVHSYANHVRTEILHHNMVNKVTTPNLVVQAYNELEQTNTIRHYGPIFPESTINALRFWKKLWQDEQRFVIHGLHRTLMDQPTYETSEFAEIVRNLRFSRPGNNYINELNITSPAMYGDKHTTGDIAPNDRFAMLVAFINSTDFLYTAIPEEKVGGNDTQTSSLTDLVPTRLHSFLNHNLSKLKILNRAQQTVRNILSNDCLNQLKHYVKHTGKNEILKLLQD.

It belongs to the asfivirus polyprotein pp62 family. As to quaternary structure, monomer. Predominantly exists as a monomer, with very little dimers. Homodimerization seems to be linked to low pH. Homodimer; disulfide-linked. Homotrimer; disulfide-linked. Homohexamer. In terms of processing, monoubiquitinated in vitro by viral UBCv1. Post-translationally, specific enzymatic cleavages in vivo yield mature proteins.

The protein localises to the host cytoplasm. Its subcellular location is the host perinuclear region. The protein resides in the virion. Functionally, essential for the correct assembly and maturation of the core of the virion. Its function is as follows. Component of the core shell. Binds to phosphatidylserine, which may enable the core shell binding with the inner membrane. Component of the core shell. Binds to phosphatidylserine and DNA, which may link the core shell to the inner membrane and to the viral nucleoid. In terms of biological role, component of the core shell. This chain is Polyprotein pp62, found in African swine fever virus (isolate Tick/Malawi/Lil 20-1/1983) (ASFV).